The chain runs to 393 residues: Formate-dependent phosphoribosylglycinamide formyltransferase (393 aa).

N(1)-(5-phospho-beta-D-ribosyl)glycinamide-binding positions include 22-23 and Glu-82; that span reads EL. ATP contacts are provided by residues Arg-114, Lys-155, 160 to 165, 195 to 198, and Glu-203; these read SSGKGQ and EGFI. Residues 119–308 form the ATP-grasp domain; sequence RLAAEELDLP…QFALHARAIL (190 aa). The Mg(2+) site is built by Glu-267 and Glu-279. Residues Asp-286, Lys-356, and 363 to 364 contribute to the N(1)-(5-phospho-beta-D-ribosyl)glycinamide site; that span reads RR.

This sequence belongs to the PurK/PurT family. Homodimer.

The enzyme catalyses N(1)-(5-phospho-beta-D-ribosyl)glycinamide + formate + ATP = N(2)-formyl-N(1)-(5-phospho-beta-D-ribosyl)glycinamide + ADP + phosphate + H(+). It participates in purine metabolism; IMP biosynthesis via de novo pathway; N(2)-formyl-N(1)-(5-phospho-D-ribosyl)glycinamide from N(1)-(5-phospho-D-ribosyl)glycinamide (formate route): step 1/1. Its function is as follows. Involved in the de novo purine biosynthesis. Catalyzes the transfer of formate to 5-phospho-ribosyl-glycinamide (GAR), producing 5-phospho-ribosyl-N-formylglycinamide (FGAR). Formate is provided by PurU via hydrolysis of 10-formyl-tetrahydrofolate. This is Formate-dependent phosphoribosylglycinamide formyltransferase from Pseudomonas putida (strain GB-1).